The primary structure comprises 128 residues: Small ribosomal subunit protein uS11 (128 aa).

This sequence belongs to the universal ribosomal protein uS11 family. As to quaternary structure, part of the 30S ribosomal subunit. Interacts with proteins S7 and S18. Binds to IF-3.

Located on the platform of the 30S subunit, it bridges several disparate RNA helices of the 16S rRNA. Forms part of the Shine-Dalgarno cleft in the 70S ribosome. The protein is Small ribosomal subunit protein uS11 of Aster yellows witches'-broom phytoplasma (strain AYWB).